We begin with the raw amino-acid sequence, 499 residues long: Glutamyl-tRNA(Gln) amidotransferase subunit A, mitochondrial (499 aa).

Catalysis depends on charge relay system residues Lys-61 and Ser-139. Residue Ser-163 is the Acyl-ester intermediate of the active site.

It belongs to the amidase family. GatA subfamily. In terms of assembly, subunit of the heterotrimeric GatCAB amidotransferase (AdT) complex, composed of A, B and C subunits.

Its subcellular location is the mitochondrion. The enzyme catalyses L-glutamyl-tRNA(Gln) + L-glutamine + ATP + H2O = L-glutaminyl-tRNA(Gln) + L-glutamate + ADP + phosphate + H(+). Its function is as follows. Allows the formation of correctly charged Gln-tRNA(Gln) through the transamidation of misacylated Glu-tRNA(Gln) in the mitochondria. The reaction takes place in the presence of glutamine and ATP through an activated gamma-phospho-Glu-tRNA(Gln). The chain is Glutamyl-tRNA(Gln) amidotransferase subunit A, mitochondrial from Coccidioides posadasii (strain C735) (Valley fever fungus).